A 295-amino-acid polypeptide reads, in one-letter code: Glutamate-binding protein GluB (295 aa).

An N-terminal signal peptide occupies residues 1-26; the sequence is MSAKRTFTRIGAILGATALAGVTLTA. Residue C27 is the site of N-palmitoyl cysteine attachment. Residue C27 is the site of S-diacylglycerol cysteine attachment.

This sequence belongs to the bacterial solute-binding protein 3 family. The complex is composed of two ATP-binding proteins (GluA), two transmembrane proteins (GluC and GluD) and a solute-binding protein (GluB).

The protein resides in the cell membrane. Binding of glutamate or asparatate induces a higher thermal stability of the protein structure. Its function is as follows. Part of the ABC transporter complex GluABCD involved in glutamate uptake. Binds glutamate with a high affinity. Also binds aspartate with high affinity, suggesting that GluB could be involved in the transport of both amino acid residues into the cell. This Corynebacterium glutamicum (strain ATCC 13032 / DSM 20300 / JCM 1318 / BCRC 11384 / CCUG 27702 / LMG 3730 / NBRC 12168 / NCIMB 10025 / NRRL B-2784 / 534) protein is Glutamate-binding protein GluB.